The primary structure comprises 326 residues: Vomeronasal type-1 receptor 94 (326 aa).

The Extracellular segment spans residues 1–32 (MSEILLFSPQPLFSYTMNKYSRLYTNSNIRNT). A helical membrane pass occupies residues 33-53 (FFSEIGIGIAANSLLLLFHIF). Residues 54–65 (KFIRGQRSRLTD) are Cytoplasmic-facing. A helical transmembrane segment spans residues 66–86 (LPIGLLSLIHLLKLLMIAFIA). At 87–110 (TDIFISWRGWDDIICKFLVYLYRS) the chain is on the extracellular side. A disulfide bond links Cys-101 and Cys-188. The helical transmembrane segment at 111–130 (FRGLSLCTTCMLSVLQAITL) threads the bilayer. Residues 131 to 150 (SPRSSCLAKFKHKSPHHVSC) lie on the Cytoplasmic side of the membrane. The helical transmembrane segment at 151–171 (AILSLSVLYMFISSHLLVSLI) threads the bilayer. The Extracellular segment spans residues 172-203 (ATPNLTTNVFMYVSESCSILPMSYLMQSMFST). Asn-175 carries an N-linked (GlcNAc...) asparagine glycan. A helical membrane pass occupies residues 204 to 224 (LLAIRDVFLISLMVLSTCYMV). Over 225–254 (ALLCRHRKQTRHLQGTSLSPKASPEKKATH) the chain is Cytoplasmic. The chain crosses the membrane as a helical span at residues 255–275 (SILMLMSFFVLMSILDSIVSC). Over 276-285 (SRTMFLYDPT) the chain is Extracellular. The helical transmembrane segment at 286–306 (SYAIQIFVSHIYATVSPFVFM) threads the bilayer. Over 307–326 (SNEKHIVNFLRSLCKRVINV) the chain is Cytoplasmic.

It belongs to the G-protein coupled receptor 1 family.

The protein resides in the cell membrane. Putative pheromone receptor implicated in the regulation of social as well as reproductive behavior. This Rattus norvegicus (Rat) protein is Vomeronasal type-1 receptor 94 (Vom1r94).